The primary structure comprises 183 residues: Transposon gamma-delta resolvase (183 aa).

The region spanning 2 to 137 (RLFGYARVST…EGRQEAMAKG (136 aa)) is the Resolvase/invertase-type recombinase catalytic domain. Serine 10 functions as the O-(5'-phospho-DNA)-serine intermediate in the catalytic mechanism. The segment at residues 161-180 (ASHISKTMNIARSTVYKVIN) is a DNA-binding region (H-T-H motif).

This sequence belongs to the site-specific recombinase resolvase family.

This protein catalyzes the site-specific recombination of the transposon and also regulates its frequency of transposition. The polypeptide is Transposon gamma-delta resolvase (tnpR) (Escherichia coli (strain K12)).